The following is a 750-amino-acid chain: MIIRSPEPEVKILVDRDPVKTSFEEWARPGHFSRTIAKGPDTTTWIWNLHADAHDFDSHTSDLEEISRKVFSAHFGQLSIIFLWLSGMYFHGARFSNYEAWLSDPTHIGPSAQVVWPIVGQEILNGDVRGGFRGIQITSGFFQIWRASGITSELQLYCTAIGALVFAALMLFAGWFHYHKAAPKLAWFQDVESMLNHHLAGLLGLGSLSWAGHQVHVSLPINQFLNAGVDPKEIPLPHEYILNRDLLAQLYPSFAEGATPFFTLNWSKYADFLTFRGGLDPVTGGLWLTDIAHHHLAIAILFLIAGHMYRTNWGIGHGLKDILEAHKGPFTGQGHKGLYEILTTSWHAQLSLNLAMLGSLTIVVAHHMYSMPPYPYLATDYGTQLSLFTHHMWIGGFLIVGAAAHAAIFMVRDYDPTTRYNDLLDRVLRHRDAIISHLNWACIFLGFHSFGLYIHNDTMSALGRPQDMFSDTAIQLQPVFAQWIQNTHALAPGATAPGATASTSLTWGGGDLVAVGGKVALLPIPLGTADFLVHHIHAFTIHVTVLILLKGVLFARSSRLIPDKANLGFRFPCDGPERGGTCQVSAWDHVFLGLFWMYNAISVVIFHFSWKMQSDVWGSVSDQGVVTHITGGNFAQSSITINGWLRDFLWAQASQVIQSYGSSLSAYGLFFLGAHFVWAFSLMFLFSGRGYWQELIESIVWAHNKLKVAPATQPRALSIIQGRAVGVTHYLLGGIATTWAFFLARIITVG.

8 consecutive transmembrane segments (helical) span residues 70–93 (VFSA…FHGA), 156–179 (LYCT…FHYH), 195–219 (LNHH…HVSL), 291–309 (IAHH…GHMY), 346–369 (WHAQ…HHMY), 385–411 (LSLF…IFMV), 433–455 (AIIS…LYIH), and 531–549 (FLVH…LILL). Residues C573 and C582 each contribute to the [4Fe-4S] cluster site. 2 consecutive transmembrane segments (helical) span residues 589 to 610 (HVFL…HFSW) and 664 to 686 (LSAY…MFLF). Residue H675 participates in chlorophyll a' binding. Residues M683 and Y691 each coordinate chlorophyll a. Position 692 (W692) interacts with phylloquinone. Residues 724–744 (AVGVTHYLLGGIATTWAFFLA) form a helical membrane-spanning segment.

Belongs to the PsaA/PsaB family. As to quaternary structure, the PsaA/B heterodimer binds the P700 chlorophyll special pair and subsequent electron acceptors. PSI consists of a core antenna complex that captures photons, and an electron transfer chain that converts photonic excitation into a charge separation. The eukaryotic PSI reaction center is composed of at least 11 subunits. Requires P700 is a chlorophyll a/chlorophyll a' dimer, A0 is one or more chlorophyll a, A1 is one or both phylloquinones and FX is a shared 4Fe-4S iron-sulfur center. as cofactor.

Its subcellular location is the plastid. It is found in the chloroplast thylakoid membrane. It carries out the reaction reduced [plastocyanin] + hnu + oxidized [2Fe-2S]-[ferredoxin] = oxidized [plastocyanin] + reduced [2Fe-2S]-[ferredoxin]. In terms of biological role, psaA and PsaB bind P700, the primary electron donor of photosystem I (PSI), as well as the electron acceptors A0, A1 and FX. PSI is a plastocyanin-ferredoxin oxidoreductase, converting photonic excitation into a charge separation, which transfers an electron from the donor P700 chlorophyll pair to the spectroscopically characterized acceptors A0, A1, FX, FA and FB in turn. Oxidized P700 is reduced on the lumenal side of the thylakoid membrane by plastocyanin. In Atropa belladonna (Belladonna), this protein is Photosystem I P700 chlorophyll a apoprotein A1.